The following is a 438-amino-acid chain: 3-phosphoshikimate 1-carboxyvinyltransferase (438 aa).

Lys-21 is a phosphoenolpyruvate binding site. The 3-phosphoshikimate site is built by Ser-22 and Arg-26. A phosphoenolpyruvate region spans residues Asn-93 to Thr-96. Positions 95, 96, and 123 each coordinate phosphoenolpyruvate. 5 residues coordinate 3-phosphoshikimate: Ser-167, Ala-168, Gln-169, Asp-315, and Lys-342. Gln-169 is a binding site for phosphoenolpyruvate. Asp-315 acts as the Proton acceptor in catalysis. Positions 346 and 387 each coordinate phosphoenolpyruvate.

The protein belongs to the EPSP synthase family. In terms of assembly, homodimer or homotetramer.

It localises to the cytoplasm. It catalyses the reaction 3-phosphoshikimate + phosphoenolpyruvate = 5-O-(1-carboxyvinyl)-3-phosphoshikimate + phosphate. Its pathway is metabolic intermediate biosynthesis; chorismate biosynthesis; chorismate from D-erythrose 4-phosphate and phosphoenolpyruvate: step 6/7. In terms of biological role, catalyzes the transfer of the enolpyruvyl moiety of phosphoenolpyruvate (PEP) to the 5-hydroxyl of shikimate-3-phosphate (S3P) to produce enolpyruvyl shikimate-3-phosphate and inorganic phosphate. The protein is 3-phosphoshikimate 1-carboxyvinyltransferase of Coxiella burnetii (strain RSA 493 / Nine Mile phase I).